Reading from the N-terminus, the 229-residue chain is Platelet-activating factor acetylhydrolase IB subunit alpha2 (229 aa).

Residue Ser-2 is modified to N-acetylserine. Ser-2 is modified (phosphoserine). The active site involves Ser-48. Residue Ser-64 is modified to Phosphoserine. Residues Asp-193 and His-196 contribute to the active site. Thr-220 is modified (phosphothreonine).

It belongs to the 'GDSL' lipolytic enzyme family. Platelet-activating factor acetylhydrolase IB beta/gamma subunits subfamily. In terms of assembly, forms a catalytic dimer which is either homodimer (alpha2/alpha2 homodimer) or heterodimer with PAFAH1B3 (alpha2/alpha1 heterodimer). Component of the cytosolic (PAF-AH (I)) heterotetrameric enzyme, which is composed of PAFAH1B1 (beta), PAFAH1B2 (alpha2) and PAFAH1B3 (alpha1) subunits. The catalytic activity of the enzyme resides in the alpha1 (PAFAH1B3) and alpha2 (PAFAH1B2) subunits, whereas the beta subunit (PAFAH1B1) has regulatory activity. Trimer formation is not essential for the catalytic activity. Interacts (homodimer form) with PAFAH1B1 (homodimer form); PAFAH1B2 competes with NDEL1 for PAFAH1B1 binding. Interacts with VLDLR; this interaction may modulate the Reelin pathway.

Its subcellular location is the cytoplasm. The catalysed reaction is a 1-O-alkyl-2-acetyl-sn-glycero-3-phosphocholine + H2O = a 1-O-alkyl-sn-glycero-3-phosphocholine + acetate + H(+). It carries out the reaction 1-O-hexadecyl-2-acetyl-sn-glycero-3-phosphocholine + H2O = 1-O-hexadecyl-sn-glycero-3-phosphocholine + acetate + H(+). It catalyses the reaction 1-O-hexadecyl-2-acetyl-sn-glycero-3-phosphate + H2O = 1-O-hexadecyl-sn-glycero-3-phosphate + acetate + H(+). The enzyme catalyses 1-O-hexadecyl-2-acetyl-sn-glycero-3-phosphoethanolamine + H2O = 1-O-hexadecyl-sn-glycero-3-phosphoethanolamine + acetate + H(+). Its activity is regulated as follows. Beta subunit (PAFAH1B1) stimulates the acetylhydrolase activity of the alpha2/alpha2 catalytic homodimer. In terms of biological role, alpha2 catalytic subunit of the cytosolic type I platelet-activating factor (PAF) acetylhydrolase (PAF-AH (I)) heterotetrameric enzyme that catalyzes the hydrolyze of the acetyl group at the sn-2 position of PAF and its analogs and modulates the action of PAF. The activity and substrate specificity of PAF-AH (I) are affected by its subunit composition. The alpha2/alpha2 homodimer (PAFAH1B2/PAFAH1B2 homodimer) hydrolyzes PAF and 1-O-alkyl-2-acetyl-sn-glycero-3-phosphorylethanolamine (AAGPE) more efficiently than 1-O-alkyl-2-acetyl-sn-glycero-3-phosphoric acid (AAGPA). In contrast, the alpha1/alpha2 heterodimer(PAFAH1B3/PAFAH1B3 heterodimer) hydrolyzes AAGPA more efficiently than PAF, but has little hydrolytic activity towards AAGPE. May play a role in male germ cell meiosis during the late pachytenestage and meiotic divisions as well as early spermiogenesis. This chain is Platelet-activating factor acetylhydrolase IB subunit alpha2, found in Mus musculus (Mouse).